A 365-amino-acid polypeptide reads, in one-letter code: tRNA(Met) cytidine acetate ligase (365 aa).

ATP is bound by residues Ile7–Leu20, Gly96, Asn152, and Arg175.

This sequence belongs to the TmcAL family.

It localises to the cytoplasm. It carries out the reaction cytidine(34) in elongator tRNA(Met) + acetate + ATP = N(4)-acetylcytidine(34) in elongator tRNA(Met) + AMP + diphosphate. Catalyzes the formation of N(4)-acetylcytidine (ac(4)C) at the wobble position of elongator tRNA(Met), using acetate and ATP as substrates. First activates an acetate ion to form acetyladenylate (Ac-AMP) and then transfers the acetyl group to tRNA to form ac(4)C34. This Streptococcus pneumoniae (strain Hungary19A-6) protein is tRNA(Met) cytidine acetate ligase.